The following is a 279-amino-acid chain: GTP cyclohydrolase MptA (279 aa).

It belongs to the GTP cyclohydrolase IV family. As to quaternary structure, homodimer. Requires Fe(2+) as cofactor.

It carries out the reaction GTP + H2O = 7,8-dihydroneopterin 2',3'-cyclic phosphate + formate + diphosphate + H(+). It functions in the pathway cofactor biosynthesis; 5,6,7,8-tetrahydromethanopterin biosynthesis. In terms of biological role, converts GTP to 7,8-dihydro-D-neopterin 2',3'-cyclic phosphate, the first intermediate in the biosynthesis of coenzyme methanopterin. The sequence is that of GTP cyclohydrolase MptA from Korarchaeum cryptofilum (strain OPF8).